Reading from the N-terminus, the 113-residue chain is U11-theraphotoxin-Hhn1a (113 aa).

The signal sequence occupies residues 1–21; that stretch reads MNTVRVTFLLVFVLAVSLGQA. The propeptide occupies 22-74; it reads DKDENRMEMQEKTEQGNSYLDFAENLPLQKLEELEAKLLEEDSEESRNSRQKR. Basic and acidic residues predominate over residues 60–69; it reads LEEDSEESRN. The interval 60 to 83 is disordered; that stretch reads LEEDSEESRNSRQKRCIGEGVPCD. 3 disulfide bridges follow: Cys-75-Cys-90, Cys-82-Cys-95, and Cys-89-Cys-110.

The protein belongs to the neurotoxin 14 (magi-1) family. 01 (HNTX-16) subfamily. Expressed by the venom gland.

The protein resides in the secreted. Functionally, probable ion channel inhibitor. This Cyriopagopus hainanus (Chinese bird spider) protein is U11-theraphotoxin-Hhn1a.